The chain runs to 291 residues: 4-hydroxy-tetrahydrodipicolinate synthase (291 aa).

T44 is a pyruvate binding site. Residue Y132 is the Proton donor/acceptor of the active site. The Schiff-base intermediate with substrate role is filled by K160. I202 contacts pyruvate.

The protein belongs to the DapA family. Homotetramer; dimer of dimers.

The protein localises to the cytoplasm. It catalyses the reaction L-aspartate 4-semialdehyde + pyruvate = (2S,4S)-4-hydroxy-2,3,4,5-tetrahydrodipicolinate + H2O + H(+). It functions in the pathway amino-acid biosynthesis; L-lysine biosynthesis via DAP pathway; (S)-tetrahydrodipicolinate from L-aspartate: step 3/4. Catalyzes the condensation of (S)-aspartate-beta-semialdehyde [(S)-ASA] and pyruvate to 4-hydroxy-tetrahydrodipicolinate (HTPA). This Sphingopyxis alaskensis (strain DSM 13593 / LMG 18877 / RB2256) (Sphingomonas alaskensis) protein is 4-hydroxy-tetrahydrodipicolinate synthase.